The primary structure comprises 443 residues: Probable serine transporter (443 aa).

Residues 1–48 lie on the Cytoplasmic side of the membrane; that stretch reads MEIASNKGVIADASTPAGRAGMSESEWREAIKFDSTDTGWVIMSIGMA. The chain crosses the membrane as a helical span at residues 49–69; that stretch reads IGAGIVFLPVQVGLMGLWVFL. Over 70 to 110 the chain is Periplasmic; that stretch reads LSSVIGYPAMYLFQRLFINTLAESPECKDYPSVISGYLGKN. The helical transmembrane segment at 111-131 threads the bilayer; the sequence is WGILLGALYFVMLVIWMFVYS. Over 132 to 149 the chain is Cytoplasmic; that stretch reads TAITNDSASYLHTFGVTE. Residues 150 to 170 form a helical membrane-spanning segment; the sequence is GLLSDSPFYGLVLICILVAIS. At 171-182 the chain is on the periplasmic side; sequence SRGEKLLFKIST. Residues 183 to 203 traverse the membrane as a helical segment; that stretch reads GMVLTKLLVVAALGVSMVGMW. The Cytoplasmic portion of the chain corresponds to 204–214; it reads HLYNVGSLPPL. The chain crosses the membrane as a helical span at residues 215 to 235; sequence GLLVKNAIITLPFTLTSILFI. Residues 236–264 lie on the Periplasmic side of the membrane; the sequence is QTLSPMVISYRSREKSIEVARHKALRAMN. Residues 265–285 traverse the membrane as a helical segment; that stretch reads IAFGILFVTVFFYAVSFTLAM. Residues 286-297 are Cytoplasmic-facing; it reads GHDEAVKAYEQN. A run of 2 helical transmembrane segments spans residues 298–318 and 319–339; these read ISAL…WVKV and VSVI…YLGF. Topologically, residues 340-367 are cytoplasmic; the sequence is REATQGIVMNILRRKMPAEKINENLVQR. A helical membrane pass occupies residues 368-388; sequence GIMIFAILLAWSAIVLNAPVL. Position 389 (serine 389) is a topological domain, periplasmic. A helical membrane pass occupies residues 390–410; that stretch reads FTSICSPIFGMVGCLIPAWLV. At 411–421 the chain is on the cytoplasmic side; it reads YKVPALHKYKG. A helical transmembrane segment spans residues 422 to 442; that stretch reads MSLYLIIVTGLLLCVSPFLAF. Position 443 (serine 443) is a topological domain, periplasmic.

This sequence belongs to the amino acid/polyamine transporter 2 family. SdaC/TdcC subfamily.

It is found in the cell inner membrane. Its function is as follows. Plays a role in L-cysteine detoxification. May transport both D- and L-serine. This chain is Probable serine transporter (dlsT), found in Escherichia coli (strain K12).